Reading from the N-terminus, the 27-residue chain is Allergen C-C (27 aa).

Belongs to the protease inhibitor I6 (cereal trypsin/alpha-amylase inhibitor) family.

Its subcellular location is the secreted. The polypeptide is Allergen C-C (Triticum aestivum (Wheat)).